A 200-amino-acid polypeptide reads, in one-letter code: Protein GrpE (200 aa).

It belongs to the GrpE family. Homodimer.

It localises to the cytoplasm. Its function is as follows. Participates actively in the response to hyperosmotic and heat shock by preventing the aggregation of stress-denatured proteins, in association with DnaK and GrpE. It is the nucleotide exchange factor for DnaK and may function as a thermosensor. Unfolded proteins bind initially to DnaJ; upon interaction with the DnaJ-bound protein, DnaK hydrolyzes its bound ATP, resulting in the formation of a stable complex. GrpE releases ADP from DnaK; ATP binding to DnaK triggers the release of the substrate protein, thus completing the reaction cycle. Several rounds of ATP-dependent interactions between DnaJ, DnaK and GrpE are required for fully efficient folding. The chain is Protein GrpE from Geobacter sulfurreducens (strain ATCC 51573 / DSM 12127 / PCA).